We begin with the raw amino-acid sequence, 369 residues long: S-adenosyl-L-methionine-dependent uroporphyrinogen III methyltransferase, chloroplastic (369 aa).

A chloroplast-targeting transit peptide spans 1–28 (MALVQRIPISSSSIRNWQQARTNLTPIC). Residues Pro-124, 200–202 (GGD), 230–231 (TA), Met-284, and Thr-341 contribute to the S-adenosyl-L-homocysteine site.

The protein belongs to the precorrin methyltransferase family. Mostly expressed in leaves, and, to a lower extent, in stems, flowers and siliques.

It localises to the plastid. The protein resides in the chloroplast. The enzyme catalyses uroporphyrinogen III + 2 S-adenosyl-L-methionine = precorrin-2 + 2 S-adenosyl-L-homocysteine + H(+). The protein operates within porphyrin-containing compound metabolism; siroheme biosynthesis; precorrin-2 from uroporphyrinogen III: step 1/1. Essential protein required for siroheme biosynthesis. Catalyzes the two successive C-2 and C-7 methylation reactions involved in the conversion of uroporphyrinogen III to precorrin-2 via the intermediate formation of precorrin-1. It is a step in the biosynthesis of siroheme. Promotes nitrogen and sulfur assimilation as well as photosynthesis efficiency by triggering chlorophyll, nitrite reductase (NiR) and sulfite reductase (SiR) biosynthesis. The chain is S-adenosyl-L-methionine-dependent uroporphyrinogen III methyltransferase, chloroplastic from Arabidopsis thaliana (Mouse-ear cress).